Here is a 366-residue protein sequence, read N- to C-terminus: Tetraacyldisaccharide 4'-kinase (366 aa).

Arg62 to Thr69 is a binding site for ATP.

Belongs to the LpxK family.

The enzyme catalyses a lipid A disaccharide + ATP = a lipid IVA + ADP + H(+). The protein operates within glycolipid biosynthesis; lipid IV(A) biosynthesis; lipid IV(A) from (3R)-3-hydroxytetradecanoyl-[acyl-carrier-protein] and UDP-N-acetyl-alpha-D-glucosamine: step 6/6. In terms of biological role, transfers the gamma-phosphate of ATP to the 4'-position of a tetraacyldisaccharide 1-phosphate intermediate (termed DS-1-P) to form tetraacyldisaccharide 1,4'-bis-phosphate (lipid IVA). The chain is Tetraacyldisaccharide 4'-kinase from Polynucleobacter necessarius subsp. necessarius (strain STIR1).